The sequence spans 493 residues: Cytochrome P450 monooxygenase esdpG (493 aa).

Residues V10 to L30 traverse the membrane as a helical segment. C434 contributes to the heme binding site.

This sequence belongs to the cytochrome P450 family. It depends on heme as a cofactor.

The protein localises to the membrane. Its pathway is secondary metabolite biosynthesis; terpenoid biosynthesis. Cytochrome P450 monooxygenasee; part of the cluster that mediates the biosynthesis of shearones, diterpenoid pyrones (DPs) which are structurally diverse meroterpenoids consisting of a diterpene linked by a pyrone, and which may exhibit a range of bioactivities. Whitin the pathway, esdpG takes part in the molecular scaffold modification via the hydroxylation at C-11 and C-12 and can transform shearone A into shearone C and shearone B into shearone D. The molecular scaffold is commonly biosynthesized by a series of enzymes including the non-reducing polyketide synthase (NR-PKS) esdpA that generates an alpha-pyrone; the prenyltransferase esdpC that attaches a geranylgeranyl pyrophosphate (GGPP) produced by the GGPP synthase (GGPPS) esdpD onto the pyrone unit; the FAD-dependent monooxygenase esdpE that converts an olefin on the diterpene unit into an epoxide; and the terpene cyclase esdpB that catalyzes the cyclization reactions to give the molecular backbone shearone A. In the modification steps, esdpF oxidizes the hydroxy group to a ketone at C-3 and esdpG then attaches hydroxy groups at both C-11 and C-12. After that, esdpI hydroxylates at C-20 and esdpH hydroxylates at C-6'. The ether bridge is generated by nucleophilic attack of the hydroxy group at C-20 to the carbonyl carbon at C-3. EsdpH can also functions prior to esdpI. The different combinations of these modification enzymes lead to the production of diverse shearone derivatives, shearone I being the end product of the pathway. The alpha-ketoglutarate-dependent dioxygenase esdpJ seems not to be involved in this pathway. In Penicillium shearii (Eupenicillium shearii), this protein is Cytochrome P450 monooxygenase esdpG.